The chain runs to 759 residues: LPS-assembly protein LptD (759 aa).

The N-terminal stretch at 1–45 is a signal peptide; sequence MKPLKLELNPRDFNHYQAAFLPYRMKIKQPLHVLCFSVCSLSAVA.

Belongs to the LptD family. As to quaternary structure, component of the lipopolysaccharide transport and assembly complex. Interacts with LptE and LptA.

The protein localises to the cell outer membrane. Its function is as follows. Together with LptE, is involved in the assembly of lipopolysaccharide (LPS) at the surface of the outer membrane. This chain is LPS-assembly protein LptD, found in Pseudoalteromonas atlantica (strain T6c / ATCC BAA-1087).